Consider the following 433-residue polypeptide: Protein slt1 (433 aa).

3 disordered regions span residues 159 to 184 (SPEESSESQAEVADQQTGPYSTSEYA), 200 to 234 (NAPEQQSGPDVAELNTLPNRSKTSSQASVSDEELS), and 252 to 433 (SNKR…DEDA). Composition is skewed to polar residues over residues 172–184 (DQQTGPYSTSEYA) and 215–228 (TLPNRSKTSSQASV). A phosphoserine mark is found at Ser-227, Ser-229, and Ser-269. The segment covering 343 to 353 (IDTKAGEKLTD) has biased composition (basic and acidic residues). Residues 385–421 (EGSNNHEQGSFNEPKSNVDSNDSASPKRPSSQASLRH) show a composition bias toward polar residues. A phosphoserine mark is found at Ser-409, Ser-415, and Ser-418.

The chain is Protein slt1 (slt1) from Schizosaccharomyces pombe (strain 972 / ATCC 24843) (Fission yeast).